The chain runs to 152 residues: UPF0225 protein YchJ (152 aa).

Belongs to the UPF0225 family.

This Salmonella typhimurium (strain LT2 / SGSC1412 / ATCC 700720) protein is UPF0225 protein YchJ (ychJ).